The chain runs to 199 residues: Probable GTP-binding protein EngB (199 aa).

The 175-residue stretch at 25–199 (IGMEVAFVGY…LKRVLNNWLR (175 aa)) folds into the EngB-type G domain. Residues serine 40 and threonine 62 each coordinate Mg(2+).

This sequence belongs to the TRAFAC class TrmE-Era-EngA-EngB-Septin-like GTPase superfamily. EngB GTPase family. Requires Mg(2+) as cofactor.

Necessary for normal cell division and for the maintenance of normal septation. The sequence is that of Probable GTP-binding protein EngB from Blochmanniella pennsylvanica (strain BPEN).